Here is a 273-residue protein sequence, read N- to C-terminus: Tryptophan synthase alpha chain (273 aa).

Active-site proton acceptor residues include E49 and D60.

Belongs to the TrpA family. As to quaternary structure, tetramer of two alpha and two beta chains.

The catalysed reaction is (1S,2R)-1-C-(indol-3-yl)glycerol 3-phosphate + L-serine = D-glyceraldehyde 3-phosphate + L-tryptophan + H2O. It functions in the pathway amino-acid biosynthesis; L-tryptophan biosynthesis; L-tryptophan from chorismate: step 5/5. The alpha subunit is responsible for the aldol cleavage of indoleglycerol phosphate to indole and glyceraldehyde 3-phosphate. This is Tryptophan synthase alpha chain from Thiobacillus denitrificans (strain ATCC 25259 / T1).